We begin with the raw amino-acid sequence, 316 residues long: Prenytransferase adrG (316 aa).

7 helical membrane-spanning segments follow: residues 36-56, 60-80, 131-151, 163-183, 191-211, 247-267, and 294-314; these read LLGF…CASI, KIPI…SIFL, VLIY…FFAL, PQIT…SLGL, PTVC…VIYS, GFLA…VVSV, and KSAF…EYCL.

This sequence belongs to the UbiA prenyltransferase family. Mg(2+) serves as cofactor.

Its subcellular location is the membrane. The catalysed reaction is 3,5-dimethylorsellinate + (2E,6E)-farnesyl diphosphate = (3R)-3-farnesyl-6-hydroxy-2,3,5-trimethyl-4-oxocyclohexa-1,5-diene-1-carboxylate + diphosphate + H(+). The protein operates within secondary metabolite biosynthesis; terpenoid biosynthesis. In terms of biological role, prenytransferase; part of the gene cluster that mediates the biosynthesis of andrastins, meroterpenoid compounds that exhibit inhibitory activity against ras farnesyltransferase, suggesting that they could be promising leads for antitumor agents. The first step of the pathway is the synthesis of 3,5-dimethylorsellinic acid (DMOA) by the polyketide synthase adrD via condensation of one acetyl-CoA starter unit with 3 malonyl-CoA units and 2 methylations. DMAO is then converted to farnesyl-DMAO by the prenyltransferase adrG. The methyltransferase adrK catalyzes the methylation of the carboxyl group of farnesyl-DMAO to farnesyl-DMAO methyl ester which is further converted to epoxyfarnesyl-DMAO methyl ester by the FAD-dependent monooxygenase adrH. The terpene cyclase adrI then catalyzes the carbon skeletal rearrangement to generate the andrastin E, the first compound in the pathway having the andrastin scaffold, with the tetracyclic ring system. The post-cyclization tailoring enzymes adrF, adrE, adrJ, and adrA, are involved in the conversion of andrastin E into andrastin A. The short chain dehydrogenase adrF is responsible for the oxidation of the C-3 a hydroxyl group of andrastin E to yield the corresponding ketone, andrastin D. The ketoreductase adrE stereoselectively reduces the carbonyl moiety to reverse the stereochemistry of the C-3 position to yield andrastin F. The acetyltransferase adrJ is the acetyltransferase that attaches the acetyl group to the C-3 hydroxyl group of andrastin F to yield andrastin C. Finally, the cytochrome P450 monooxygenase adrA catalyzes two sequential oxidation reactions of the C-23 methyl group, to generate the corresponding alcohol andrastin B, and aldehyde andrastin A. The chain is Prenytransferase adrG from Penicillium roqueforti.